The sequence spans 671 residues: DNA ligase (671 aa).

NAD(+) is bound by residues 32-36 (DAEYD), 81-82 (SL), and Glu113. Lys115 (N6-AMP-lysine intermediate) is an active-site residue. NAD(+) contacts are provided by Arg136, Glu173, Lys290, and Lys314. Residues Cys408, Cys411, Cys426, and Cys432 each contribute to the Zn(2+) site. A BRCT domain is found at 593-671 (EIDSPFAGKT…EAEMIRLLGA (79 aa)).

The protein belongs to the NAD-dependent DNA ligase family. LigA subfamily. It depends on Mg(2+) as a cofactor. Requires Mn(2+) as cofactor.

The catalysed reaction is NAD(+) + (deoxyribonucleotide)n-3'-hydroxyl + 5'-phospho-(deoxyribonucleotide)m = (deoxyribonucleotide)n+m + AMP + beta-nicotinamide D-nucleotide.. Its function is as follows. DNA ligase that catalyzes the formation of phosphodiester linkages between 5'-phosphoryl and 3'-hydroxyl groups in double-stranded DNA using NAD as a coenzyme and as the energy source for the reaction. It is essential for DNA replication and repair of damaged DNA. The chain is DNA ligase from Salmonella paratyphi B (strain ATCC BAA-1250 / SPB7).